An 873-amino-acid chain; its full sequence is DNA mismatch repair protein MutS (873 aa).

Residue 625–632 (GPNMGGKS) coordinates ATP.

Belongs to the DNA mismatch repair MutS family.

In terms of biological role, this protein is involved in the repair of mismatches in DNA. It is possible that it carries out the mismatch recognition step. This protein has a weak ATPase activity. The chain is DNA mismatch repair protein MutS from Xanthomonas euvesicatoria pv. vesicatoria (strain 85-10) (Xanthomonas campestris pv. vesicatoria).